A 285-amino-acid chain; its full sequence is Pantothenate synthetase (285 aa).

30 to 37 (MGFLHEGH) is an ATP binding site. Catalysis depends on His37, which acts as the Proton donor. Gln61 is a (R)-pantoate binding site. Beta-alanine is bound at residue Gln61. 147 to 150 (GQKD) provides a ligand contact to ATP. Gln153 is a (R)-pantoate binding site. Residues Val176 and 184–187 (KSSR) contribute to the ATP site.

Belongs to the pantothenate synthetase family. In terms of assembly, homodimer.

The protein resides in the cytoplasm. It catalyses the reaction (R)-pantoate + beta-alanine + ATP = (R)-pantothenate + AMP + diphosphate + H(+). It participates in cofactor biosynthesis; (R)-pantothenate biosynthesis; (R)-pantothenate from (R)-pantoate and beta-alanine: step 1/1. Functionally, catalyzes the condensation of pantoate with beta-alanine in an ATP-dependent reaction via a pantoyl-adenylate intermediate. The polypeptide is Pantothenate synthetase (Listeria monocytogenes serotype 4b (strain F2365)).